Reading from the N-terminus, the 259-residue chain is Gasdermin bGSDM (259 aa).

Cysteine 3 carries the S-palmitoyl cysteine lipid modification. A run of 4 beta stranded transmembrane segments spans residues 70-86 (FQFRASSILQVGVAASV), 98-116 (SGSFSSAFSSSNADTIQLS), 162-179 (GIRISVADKSKKQVDLSA), and 187-203 (AKAKMELKREDTGSYAF). The tract at residues 244-259 (PFAFIGDDAFVDLPES) is C-terminal region.

The protein belongs to the bacterial gasdermin family. As to quaternary structure, monomer in solution. In terms of assembly, forms large, homooligomeric ring-shaped pores when inserted in membranes. Post-translationally, palmitoylation helps stabilize the inactive state; may self palmitoylate. Palmitoylation plays a significant role in pore formation.

The protein resides in the cytoplasm. It is found in the cell inner membrane. With respect to regulation, the full-length protein before cleavage is inactive: intramolecular interactions between the N-terminal domain and the C-terminal region as well as the lipid modification, mediate autoinhibition. The pyroptosis-like-inducing activity is carried by the released N-terminal domain (Gasdermin bGSDM, N-terminus). Functionally, precursor of a pore-forming protein involved in defense against bacteriophages. Expression of bGSDM and the neighboring protease gene (Ga0098714_109514) is toxic in E.coli on solid medium. Cleavage of this precursor by its dedicated protease releases the active moiety (gasdermin bGSDM, N-terminus) which inserts into membranes, forming pores and triggering cell death. In terms of biological role, pore-forming protein that causes membrane permeabilization via a pyroptosis-like activity. Makes ring-like pores when released. This is Gasdermin bGSDM from Bradyrhizobium tropiciagri.